Reading from the N-terminus, the 351-residue chain is uncharacterized protein (351 aa).

Residues His-23, His-25, Lys-151, His-184, His-212, and Asp-270 each coordinate Zn(2+). The residue at position 151 (Lys-151) is an N6-carboxylysine.

It belongs to the metallo-dependent hydrolases superfamily. Phosphotriesterase family. It depends on Zn(2+) as a cofactor.

This is an uncharacterized protein from Mycoplasma pneumoniae (strain ATCC 29342 / M129 / Subtype 1) (Mycoplasmoides pneumoniae).